We begin with the raw amino-acid sequence, 438 residues long: UDP-N-acetylmuramoylalanine--D-glutamate ligase (438 aa).

ATP is bound at residue 112–118 (GSNGKST).

This sequence belongs to the MurCDEF family.

Its subcellular location is the cytoplasm. It catalyses the reaction UDP-N-acetyl-alpha-D-muramoyl-L-alanine + D-glutamate + ATP = UDP-N-acetyl-alpha-D-muramoyl-L-alanyl-D-glutamate + ADP + phosphate + H(+). It functions in the pathway cell wall biogenesis; peptidoglycan biosynthesis. In terms of biological role, cell wall formation. Catalyzes the addition of glutamate to the nucleotide precursor UDP-N-acetylmuramoyl-L-alanine (UMA). The polypeptide is UDP-N-acetylmuramoylalanine--D-glutamate ligase (Salmonella typhimurium (strain LT2 / SGSC1412 / ATCC 700720)).